A 511-amino-acid chain; its full sequence is Alpha-amylase 1A (511 aa).

A signal peptide spans 1 to 15 (MKLFWLLFTIGFCWA). The residue at position 16 (Gln-16) is a Pyrrolidone carboxylic acid. 3 cysteine pairs are disulfide-bonded: Cys-43–Cys-101, Cys-85–Cys-130, and Cys-156–Cys-175. Ca(2+) is bound by residues Asn-115, Arg-173, and Asp-182. Arg-210 contacts chloride. The Nucleophile role is filled by Asp-212. Residue His-216 coordinates Ca(2+). Glu-248 (proton donor) is an active-site residue. Chloride contacts are provided by Asn-313 and Arg-352. At Asn-365 the chain carries Deamidated asparagine; partial. An intrachain disulfide couples Cys-393 to Cys-399. Asn-427 carries the post-translational modification Deamidated asparagine; partial; alternate. The N-linked (GlcNAc...) asparagine glycan is linked to Asn-427. Cys-465 and Cys-477 form a disulfide bridge. At Asn-474 the chain carries Deamidated asparagine; partial. A glycan (N-linked (GlcNAc...) asparagine) is linked at Asn-476.

This sequence belongs to the glycosyl hydrolase 13 family. As to quaternary structure, monomer. Ca(2+) serves as cofactor. Requires chloride as cofactor.

Its subcellular location is the secreted. The catalysed reaction is Endohydrolysis of (1-&gt;4)-alpha-D-glucosidic linkages in polysaccharides containing three or more (1-&gt;4)-alpha-linked D-glucose units.. Functionally, calcium-binding enzyme that initiates starch digestion in the oral cavity. Catalyzes the hydrolysis of internal (1-&gt;4)-alpha-D-glucosidic bonds, yielding a mixture of maltose, isomaltose, small amounts of glucose as well as small linear and branched oligosaccharides called dextrins. This chain is Alpha-amylase 1A, found in Homo sapiens (Human).